A 1117-amino-acid polypeptide reads, in one-letter code: Cytospin-A (1117 aa).

Disordered regions lie at residues 1-176 (MKKA…NQIS), 293-323 (SLSP…GSVE), and 358-390 (SSDD…NASE). A compositionally biased stretch (low complexity) spans 45-90 (TAASLSKTKSSDDLLAGMAGGVTVTNGVKGKKSTCPSAAPSASAPA). Polar residues predominate over residues 93-117 (TVENKSKISTGTASSTKRNTSTGNK). 2 stretches are compositionally biased toward basic and acidic residues: residues 120–131 (SSTRERLRERTR) and 158–171 (TATE…KSKS). Residues 168-280 (KSKSDNQISD…LNALGFSLEQ (113 aa)) are a coiled coil. Positions 293–303 (SLSPEITPGNQ) are enriched in polar residues. Low complexity predominate over residues 358–377 (SSDDALDAPSSSESEGIPSI). Phosphoserine occurs at positions 384, 385, and 389. Coiled coils occupy residues 394-449 (ACLT…MESL) and 487-807 (RYME…RGRV). 3 positions are modified to phosphoserine: Ser868, Ser881, and Ser887. Positions 919–1001 (RTSSASRPAS…SRIREERKDP (83 aa)) are disordered. The span at 946–956 (RSSEEMKRDIS) shows a compositional bias: basic and acidic residues. Low complexity predominate over residues 971–990 (TTSPQLSLSSSPTASVTPTT). The Calponin-homology (CH) domain maps to 1011–1116 (GSKRNALLKW…YVTAIYKYFE (106 aa)).

It belongs to the cytospin-A family. In terms of assembly, may interact with both microtubules and actin cytoskeleton.

The protein localises to the cytoplasm. It localises to the cytoskeleton. The protein resides in the spindle. Its subcellular location is the cell junction. It is found in the gap junction. Functionally, involved in cytokinesis and spindle organization. May play a role in actin cytoskeleton organization and microtubule stabilization and hence required for proper cell adhesion and migration. The protein is Cytospin-A (SPECC1L) of Pan troglodytes (Chimpanzee).